A 414-amino-acid polypeptide reads, in one-letter code: Histidine--tRNA ligase (414 aa).

It belongs to the class-II aminoacyl-tRNA synthetase family. Homodimer.

The protein resides in the cytoplasm. The catalysed reaction is tRNA(His) + L-histidine + ATP = L-histidyl-tRNA(His) + AMP + diphosphate + H(+). This chain is Histidine--tRNA ligase, found in Solibacter usitatus (strain Ellin6076).